A 151-amino-acid polypeptide reads, in one-letter code: Large ribosomal subunit protein uL15 (151 aa).

A disordered region spans residues 1–58; it reads MELNQLKSVPKARNHKTKTLGRGHGSGLGKTSGRGQKGQKARKSGLTRPGFEGGQTPL. The segment covering 10 to 21 has biased composition (basic residues); that stretch reads PKARNHKTKTLG. Gly residues predominate over residues 22 to 36; sequence RGHGSGLGKTSGRGQ.

It belongs to the universal ribosomal protein uL15 family. Part of the 50S ribosomal subunit.

Functionally, binds to the 23S rRNA. The sequence is that of Large ribosomal subunit protein uL15 from Mycoplasma pneumoniae (strain ATCC 29342 / M129 / Subtype 1) (Mycoplasmoides pneumoniae).